A 1403-amino-acid chain; its full sequence is Envelopment polyprotein (1403 aa).

The N-terminal stretch at 1–17 (MLLNIVLISNLACLAFA) is a signal peptide. At 18–209 (LPLKEGTRGS…ELMIESFCTN (192 aa)) the chain is on the lumenal side. N-linked (GlcNAc...) asparagine; by host glycosylation is present at N40. A helical membrane pass occupies residues 210–230 (LELILLVTFILVGSVMMMILT). At 231-314 (KTYIVYVFIP…PKTRKLCKSK (84 aa)) the chain is on the cytoplasmic side. The helical transmembrane segment at 315–335 (ISNIVLCVITSLIFFSFITPI) threads the bilayer. Over 336 to 361 (SSQCIDIEKLPDEYITCKRELANIKS) the chain is Lumenal. Residues 362–382 (LTIDDTYSFIYSCTCIIVLIL) traverse the membrane as a helical segment. The Cytoplasmic portion of the chain corresponds to 383 to 448 (LKKAAKYILY…FKFESSYNRT (66 aa)). A helical transmembrane segment spans residues 449 to 469 (GLIIFMLLLVPTIVMTQETSI). At 470–1361 (NCKNIQSTQL…GNLSFYWRLT (892 aa)) the chain is on the lumenal side. An intrachain disulfide couples C471 to C487. A glycan (N-linked (GlcNAc...) asparagine; by host) is linked at N493. 3 disulfides stabilise this stretch: C523–C550, C580–C589, and C591–C598. Residues N686 and N1353 are each glycosylated (N-linked (GlcNAc...) asparagine; by host). The helical transmembrane segment at 1362 to 1382 (IYIIISLIMLILFLYILIPLC) threads the bilayer. The Cytoplasmic portion of the chain corresponds to 1383–1403 (KRLKGLLEYNERIYQMENKFK).

Belongs to the nairovirus envelope glycoprotein family. As to quaternary structure, heterodimer with glycoprotein C; in prefusion state. Heterodimer with glycoprotein N; in prefusion state. Homotrimeric; in postfusion state. Post-translationally, specific enzymatic cleavage by host MBTPS1/S1P/SKI-1 endopeptidase yield glycoprotein N. Specific enzymatic cleavages by host furin-like protease and MBTPS1/S1P endopeptidase yield GP38. In terms of processing, glycosylated.

The protein localises to the host endoplasmic reticulum membrane. It localises to the virion membrane. It is found in the host Golgi apparatus membrane. In terms of biological role, glycoprotein C and glycoprotein N interact with each other and are present at the surface of the virion. Glycoprotein N probably locks the Gn-Gc complex in a prefusion state. Glycoprotein N and glycoprotein C are able to attach the virion to host cell receptors. This attachment induces virion internalization predominantly through clathrin-dependent endocytosis. Functionally, glycoprotein C and glycoprotein N interact with each other and are present at the surface of the virion. The spikes at the surface of the virion are formed by an N-terminal extension of glycoprotein C. Glycoprotein N and glycoprotein C are able to attach the virion to host cell receptors. This attachment induces virion internalization predominantly through clathrin-dependent endocytosis. Class II fusion protein that promotes fusion of viral membrane with host endosomal membrane after endocytosis of the virion. Exposure to potassium is necessary for the conformational change leading to fusion. This is Envelopment polyprotein (GP) from Bos taurus (Bovine).